The following is a 412-amino-acid chain: Divalent metal cation transporter MntH (412 aa).

A run of 11 helical transmembrane segments spans residues 19-39 (LALM…GNFA), 46-66 (ASFG…AMLI), 94-114 (VWFY…AEFI), 122-142 (LILG…TFLI), 156-176 (VIGG…FFSQ), 196-216 (AVFL…IYLH), 241-261 (IAMT…AAAF), 290-310 (IFGL…TLAG), 322-342 (IPLW…ILMG), 348-368 (ILVM…VPLL), and 392-412 (AIVV…ALGL).

It belongs to the NRAMP family.

It localises to the cell inner membrane. H(+)-stimulated, divalent metal cation uptake system. This is Divalent metal cation transporter MntH from Cronobacter sakazakii (strain ATCC BAA-894) (Enterobacter sakazakii).